The primary structure comprises 355 residues: Guanine nucleotide-binding protein G(i) subunit alpha-2 (355 aa).

A lipid anchor (N-myristoyl glycine) is attached at Gly2. Cys3 is lipidated: S-palmitoyl cysteine. The region spanning 32–355 (REVKLLLLGA…KNNLKDCGLF (324 aa)) is the G-alpha domain. Positions 35–48 (KLLLLGAGESGKST) are G1 motif. GTP is bound by residues 40-47 (GAGESGKS), 176-182 (LRTRVKT), 201-205 (DVGGQ), 270-273 (NKKD), and Ala327. Mg(2+) contacts are provided by Ser47 and Thr182. Residues 174 to 182 (DVLRTRVKT) form a G2 motif region. The tract at residues 197–206 (FKMFDVGGQR) is G3 motif. The segment at 266–273 (ILFLNKKD) is G4 motif. Positions 325–330 (TCATDT) are G5 motif.

Belongs to the G-alpha family. G(i/o/t/z) subfamily. In terms of assembly, g proteins are composed of 3 units; alpha, beta and gamma. The alpha chain contains the guanine nucleotide binding site. In this context, interacts with GNB2. Interacts with UNC5B. Interacts with GPSM1. Interacts with RGS12 and RGS14. Interacts (inactive GDP-bound form) with NUCB1 (via GBA motif); the interaction leads to activation of GNAI3. Interacts (inactive GDP-bound form) with CCDC88C/DAPLE (via GBA motif). Interacts (inactive GDP-bound form) with CCDC8A/GIV (via GBA motif).

It is found in the cytoplasm. The protein localises to the cell membrane. Its subcellular location is the cytoskeleton. It localises to the microtubule organizing center. The protein resides in the centrosome. It is found in the membrane. Guanine nucleotide-binding proteins (G proteins) are involved as modulators or transducers in various transmembrane signaling systems. The G(i) proteins are involved in hormonal regulation of adenylate cyclase: they inhibit the cyclase in response to beta-adrenergic stimuli. May play a role in cell division. The chain is Guanine nucleotide-binding protein G(i) subunit alpha-2 (Gnai2) from Rattus norvegicus (Rat).